Here is a 391-residue protein sequence, read N- to C-terminus: Phosphoglycerate kinase (391 aa).

Residues 21 to 23 (DLN), arginine 36, 59 to 62 (HLGR), arginine 114, and arginine 147 each bind substrate. ATP-binding positions include lysine 198, glutamate 315, and 344–347 (GGDT).

Belongs to the phosphoglycerate kinase family. Monomer.

Its subcellular location is the cytoplasm. It carries out the reaction (2R)-3-phosphoglycerate + ATP = (2R)-3-phospho-glyceroyl phosphate + ADP. It functions in the pathway carbohydrate degradation; glycolysis; pyruvate from D-glyceraldehyde 3-phosphate: step 2/5. The polypeptide is Phosphoglycerate kinase (Actinobacillus pleuropneumoniae serotype 5b (strain L20)).